The sequence spans 208 residues: Histone H1t (208 aa).

Positions 1–12 (MSETAPAASSTL) are enriched in polar residues. A disordered region spans residues 1–39 (MSETAPAASSTLVPAPVEKPATKRRGKKPGMATARKPRG). Phosphoserine is present on Ser9. Residues 38–111 (RGFSVSKLIP…GASGSFKLSK (74 aa)) form the H15 domain. Arg56 carries the citrulline modification. The segment at 93–208 (GVLVQTKGTG…TDLRKAAGRK (116 aa)) is disordered. Residues 121 to 134 (KGKKSASAKAKKLG) show a composition bias toward basic residues. At Ser141 the chain carries Phosphoserine. A compositionally biased stretch (basic residues) spans 143–154 (KSSKTKVVKKPK). The residue at position 156 (Thr156) is a Phosphothreonine. Residues Ser163, Ser178, and Ser187 each carry the phosphoserine modification. Basic and acidic residues predominate over residues 199-208 (TDLRKAAGRK).

The protein belongs to the histone H1/H5 family. Phosphorylated in early spermatids. In terms of processing, citrullination at Arg-56 (H1R54ci) by PADI4 takes place within the DNA-binding site of H1 and results in its displacement from chromatin and global chromatin decondensation, thereby promoting pluripotency and stem cell maintenance. In terms of tissue distribution, testis-specific. Expressed in pachytene spermatocytes during meiotic prophase I.

The protein localises to the nucleus. Its subcellular location is the chromosome. Its function is as follows. Testis-specific histone H1 that forms less compacted chromatin compared to other H1 histone subtypes. Formation of more relaxed chromatin may be required to promote chromatin architecture required for proper chromosome regulation during meiosis, such as homologous recombination. Histones H1 act as linkers that bind to nucleosomes and compact polynucleosomes into a higher-order chromatin configuration. The polypeptide is Histone H1t (Rattus norvegicus (Rat)).